Consider the following 190-residue polypeptide: Peptidyl-tRNA hydrolase (190 aa).

Phenylalanine 14 is a tRNA binding site. Histidine 19 (proton acceptor) is an active-site residue. TRNA-binding residues include methionine 64, asparagine 66, and asparagine 112.

It belongs to the PTH family. As to quaternary structure, monomer.

The protein resides in the cytoplasm. The catalysed reaction is an N-acyl-L-alpha-aminoacyl-tRNA + H2O = an N-acyl-L-amino acid + a tRNA + H(+). Functionally, hydrolyzes ribosome-free peptidyl-tRNAs (with 1 or more amino acids incorporated), which drop off the ribosome during protein synthesis, or as a result of ribosome stalling. In terms of biological role, catalyzes the release of premature peptidyl moieties from peptidyl-tRNA molecules trapped in stalled 50S ribosomal subunits, and thus maintains levels of free tRNAs and 50S ribosomes. The protein is Peptidyl-tRNA hydrolase of Staphylococcus saprophyticus subsp. saprophyticus (strain ATCC 15305 / DSM 20229 / NCIMB 8711 / NCTC 7292 / S-41).